A 790-amino-acid polypeptide reads, in one-letter code: Pleckstrin homology domain-containing family G member 6 (790 aa).

The segment at 63–91 is disordered; the sequence is SGQARGLSPMRLRDPEPEKRHGGHVGAGL. Residues 73–82 are compositionally biased toward basic and acidic residues; sequence RLRDPEPEKR. One can recognise a DH domain in the interval 161–353; that stretch reads HQQEALWELL…ESFLRHINGQ (193 aa). Residues 409–509 form the PH domain; that stretch reads QLLLEGPVRV…WLEKTQQAQA (101 aa). Basic and acidic residues-rich tracts occupy residues 529-538 and 625-635; these read LYRDQDRESP and ELRDIPLRPHP. Disordered stretches follow at residues 529-677, 690-730, and 748-790; these read LYRD…ASER, LRGQ…HTSL, and SQRI…ASEV. A compositionally biased stretch (basic and acidic residues) spans 748–762; that stretch reads SQRIEGAEEPRDSRP.

In terms of assembly, interacts with MYH10. Interacts with ELMO1 and EZR (in an open conformation). Interacts with CSPP1. Highest expression in the placenta. Low levels in small intestine, lung, liver, kidney, thymus and heart.

The protein localises to the cell projection. It localises to the microvillus. It is found in the cytoplasm. The protein resides in the cytoskeleton. Its subcellular location is the spindle. The protein localises to the spindle pole. It localises to the cleavage furrow. Functionally, guanine nucleotide exchange factor activating the small GTPase RHOA, which, in turn, induces myosin filament formation. Also activates RHOG. Does not activate RAC1, or to a much lower extent than RHOA and RHOG. Part of a functional unit, involving PLEKHG6, MYH10 and RHOA, at the cleavage furrow to advance furrow ingression during cytokinesis. In epithelial cells, required for the formation of microvilli and membrane ruffles on the apical pole. Along with EZR, required for normal macropinocytosis. This Homo sapiens (Human) protein is Pleckstrin homology domain-containing family G member 6 (PLEKHG6).